The primary structure comprises 289 residues: Serine/threonine-protein phosphatase PGAM5, mitochondrial (289 aa).

Residues 1–6 (MAFRQA) are Mitochondrial matrix-facing. Residues 7-29 (LQLAACGLAGGSAAVLFSAVAVG) traverse the membrane as a helical segment. Over 30-289 (KPRAGGDAEP…FMPPDKITRS (260 aa)) the chain is Mitochondrial intermembrane. Residues 32–59 (RAGGDAEPRPAEPPAWAGGARPGPGVWD) are disordered. A compositionally biased stretch (low complexity) spans 45–56 (PAWAGGARPGPG). The segment at 77–82 (NVESGE) is interaction with KEAP1. A phosphoserine mark is found at Ser-80 and Ser-87. Lys-116, Lys-144, and Lys-191 each carry N6-acetyllysine.

Belongs to the phosphoglycerate mutase family. BPG-dependent PGAM subfamily. In terms of assembly, dimer. Forms a ternary complex with NFE2L2 and KEAP1. Interacts with BCL2L1 and MAP3K5. Upon TNF-induced necrosis, forms in complex with RIPK1, RIPK3 and MLKL; the formation of this complex leads to PGAM5 phosphorylation. Isoform 2, but not isoform 1, interacts with DNM1L; this interaction leads to DNM1L dephosphorylation and activation and eventually to mitochondria fragmentation. Post-translationally, both isoform 1 and isoform 2 are phosphorylated by the RIPK1/RIPK3 complex under necrotic conditions. This phosphorylation increases PGAM5 phosphatase activity. In terms of processing, proteolytically cleaved by PARL in response to loss of mitochondrial membrane potential.

The protein resides in the mitochondrion outer membrane. The protein localises to the mitochondrion inner membrane. The enzyme catalyses O-phospho-L-seryl-[protein] + H2O = L-seryl-[protein] + phosphate. The catalysed reaction is O-phospho-L-threonyl-[protein] + H2O = L-threonyl-[protein] + phosphate. Mitochondrial serine/threonine phosphatase that dephosphorylates various substrates and thus plays a role in different biological processes including cellular senescence or mitophagy. Modulates cellular senescence by regulating mitochondrial dynamics. Mechanistically, participates in mitochondrial fission through dephosphorylating DNM1L/DRP1. Additionally, dephosphorylates MFN2 in a stress-sensitive manner and consequently protects it from ubiquitination and degradation to promote mitochondrial network formation. Regulates mitophagy independent of PARKIN by interacting with and dephosphorylating FUNDC1, which interacts with LC3. Regulates anti-oxidative response by forming a tertiary complex with KEAP1 and NRF2. Regulates necroptosis by acting as a RIPK3 target and recruiting the RIPK1-RIPK3-MLKL necrosis 'attack' complex to mitochondria. The polypeptide is Serine/threonine-protein phosphatase PGAM5, mitochondrial (PGAM5) (Homo sapiens (Human)).